Consider the following 407-residue polypeptide: Substance-P receptor (407 aa).

Over 1 to 31 (MDNVLPMDSDLFPNISTNTSESNQFVQPTWQ) the chain is Extracellular. N-linked (GlcNAc...) asparagine glycans are attached at residues Asn-14 and Asn-18. Residues 32–54 (IVLWAAAYTVIVVTSVVGNVVVI) form a helical membrane-spanning segment. At 55 to 64 (WIILAHKRMR) the chain is on the cytoplasmic side. Residues 65–86 (TVTNYFLVNLAFAEACMAAFNT) form a helical membrane-spanning segment. Topologically, residues 87-106 (VVNFTYAVHNVWYYGLFYCK) are extracellular. The cysteines at positions 105 and 180 are disulfide-linked. A helical membrane pass occupies residues 107 to 128 (FHNFFPIAALFASIYSMTAVAF). The Cytoplasmic portion of the chain corresponds to 129–148 (DRYMAIIHPLQPRLSATATK). A helical membrane pass occupies residues 149–169 (VVIFVIWVLALLLAFPQGYYS). The Extracellular segment spans residues 170-194 (TTETMPSRVVCMIEWPEHPNRTYEK). A helical membrane pass occupies residues 195–219 (AYHICVTVLIYFLPLLVIGYAYTVV). Residues 220 to 248 (GITLWASEIPGDSSDRYHEQVSAKRKVVK) lie on the Cytoplasmic side of the membrane. The helical transmembrane segment at 249-270 (MMIVVVCTFAICWLPFHVFFLL) threads the bilayer. At 271-283 (PYINPDLYLKKFI) the chain is on the extracellular side. Residues 284-308 (QQVYLASMWLAMSSTMYNPIIYCCL) traverse the membrane as a helical segment. Topologically, residues 309-407 (NDRFRLGFKH…SSSFYSNMLA (99 aa)) are cytoplasmic. Residue Cys-322 is the site of S-palmitoyl cysteine attachment. Positions 362–407 (VGAHEEEPEEGPKATPSSLDLTSNGSSRSNSKTMTESSSFYSNMLA) are disordered. The segment covering 376–407 (TPSSLDLTSNGSSRSNSKTMTESSSFYSNMLA) has biased composition (polar residues).

Belongs to the G-protein coupled receptor 1 family. In terms of assembly, interacts with ARRB1.

Its subcellular location is the cell membrane. Functionally, this is a receptor for the tachykinin neuropeptide substance P. It is probably associated with G proteins that activate a phosphatidylinositol-calcium second messenger system. The rank order of affinity of this receptor to tachykinins is: substance P &gt; substance K &gt; neuromedin-K. The sequence is that of Substance-P receptor (Tacr1) from Rattus norvegicus (Rat).